Here is a 411-residue protein sequence, read N- to C-terminus: Tyrosine--tRNA ligase (411 aa).

Residues 48-57 carry the 'HIGH' region motif; that stretch reads PTAPDIHLGH. The short motif at 232–236 is the 'KMSKS' region element; that stretch reads KMSKS. Position 235 (lysine 235) interacts with ATP. The 63-residue stretch at 347–409 folds into the S4 RNA-binding domain; that stretch reads VLLPKVLFSA…GKRRFLKIIF (63 aa).

The protein belongs to the class-I aminoacyl-tRNA synthetase family. TyrS type 2 subfamily. Homodimer.

The protein localises to the cytoplasm. The catalysed reaction is tRNA(Tyr) + L-tyrosine + ATP = L-tyrosyl-tRNA(Tyr) + AMP + diphosphate + H(+). In terms of biological role, catalyzes the attachment of tyrosine to tRNA(Tyr) in a two-step reaction: tyrosine is first activated by ATP to form Tyr-AMP and then transferred to the acceptor end of tRNA(Tyr). This Carboxydothermus hydrogenoformans (strain ATCC BAA-161 / DSM 6008 / Z-2901) protein is Tyrosine--tRNA ligase.